Reading from the N-terminus, the 874-residue chain is MKSSEIRQKFLQFFQSKGHTIVPSSSLVPANDPTLLFTNSGMVQFKDVFTGKEARAYKRATSSQRSVRAGGKHNDLENVGYTARHHTFFEMLGNFSFGDYFKREAIQYAWELLTQVYKLPAEKLWVTVYQEDDEAYDIWAKEVGVPAERIIRIGDNKGARYASDNFWQMADTGPCGPCSEIFYDHGPEIWGGPPGSPEEDGDRYIEIWNLVFMQFERDAAGNMERLPKPCVDTGMGLERIAAVLQHVHSNYEIDLFQKLIAAAARETGVKDLADNSLKVIADHIRACAFLIVDGIIPSNEGRGYVLRRIVRRALRHGYKLGQTKSFFHRLVPDLVAEMGEAYPELAQVAERVAQVLRQEEERFGETLEHGMKILDGALAKVAKGDPLDGTTLFTLYDTYGFPVDLTADICREREVEVDMAGFEAAMQRQREQARAAGKFKMAEGLSYEGAETRFEGYENLELSGVKVTALYVEGTQVEQVSAGQDAVVVLDATPFYAESGGQVGDTGLLEAGGVRFAVADTLKIQPGVFGHHGTLEAGALKVGDTLLARVDAVRRARTVRNHSATHLMHKALREVLGAHVQQRGSLVDPDKTRFDFAHDAPMTAEQIARVEAIVNAEVLANQATEAKVMAYDDAVKGGAMALFGEKYGDTVRVLDIGFSRELCGGTHVRRTGDIGLFKVVSEGGVAAGVRRIEAITGDNALAWVQDQNALLQRAAGVLRAPAHELPERIAQVQEQLKALEKELEQARTKLAASAGNDLVATATVEVKGIKVLAASIGDVDPKALRGMVDNLKDRLKPAVVLLAAGSADGKISLVGGVTADLTGRIKAGDLVGFVAGQVGGKGGGRPDMAMGGGTDLAALPAAVASVQKWVDERL.

Zn(2+)-binding residues include H562, H566, C663, and H667.

The protein belongs to the class-II aminoacyl-tRNA synthetase family. Zn(2+) is required as a cofactor.

Its subcellular location is the cytoplasm. The enzyme catalyses tRNA(Ala) + L-alanine + ATP = L-alanyl-tRNA(Ala) + AMP + diphosphate. Functionally, catalyzes the attachment of alanine to tRNA(Ala) in a two-step reaction: alanine is first activated by ATP to form Ala-AMP and then transferred to the acceptor end of tRNA(Ala). Also edits incorrectly charged Ser-tRNA(Ala) and Gly-tRNA(Ala) via its editing domain. This chain is Alanine--tRNA ligase, found in Bordetella pertussis (strain Tohama I / ATCC BAA-589 / NCTC 13251).